We begin with the raw amino-acid sequence, 948 residues long: Peroxisomal ATPase pex6 (948 aa).

695–702 (GPPGTGKT) contacts ATP.

Belongs to the AAA ATPase family. As to quaternary structure, interacts with PEX1; forming the PEX1-PEX6 AAA ATPase complex, which is composed of a heterohexamer formed by a trimer of PEX1-PEX6 dimers.

It localises to the cytoplasm. The protein localises to the cytosol. The protein resides in the peroxisome membrane. The catalysed reaction is ATP + H2O = ADP + phosphate + H(+). Functionally, component of the PEX1-PEX6 AAA ATPase complex, a protein dislocase complex that mediates the ATP-dependent extraction of the PEX5 receptor from peroxisomal membranes, an essential step for PEX5 recycling. Specifically recognizes PEX5 monoubiquitinated at 'Cys-6', and pulls it out of the peroxisome lumen through the PEX2-PEX10-PEX12 retrotranslocation channel. Extraction by the PEX1-PEX6 AAA ATPase complex is accompanied by unfolding of the TPR repeats and release of bound cargo from PEX5. In Schizosaccharomyces pombe (strain 972 / ATCC 24843) (Fission yeast), this protein is Peroxisomal ATPase pex6 (pex6).